A 942-amino-acid polypeptide reads, in one-letter code: Leucine--tRNA ligase 1 (942 aa).

Positions 39-49 match the 'HIGH' region motif; the sequence is PYTNSPLHIGH. The short motif at 624-628 is the 'KMSKS' region element; sequence KMSKS. Lys627 provides a ligand contact to ATP.

The protein belongs to the class-I aminoacyl-tRNA synthetase family.

It localises to the cytoplasm. It catalyses the reaction tRNA(Leu) + L-leucine + ATP = L-leucyl-tRNA(Leu) + AMP + diphosphate. In Sulfolobus acidocaldarius (strain ATCC 33909 / DSM 639 / JCM 8929 / NBRC 15157 / NCIMB 11770), this protein is Leucine--tRNA ligase 1.